A 281-amino-acid chain; its full sequence is Octanoyl-[GcvH]:protein N-octanoyltransferase (281 aa).

The BPL/LPL catalytic domain maps to 44 to 250; the sequence is GESAATMRSW…TLQQFAPKLT (207 aa). Cysteine 149 acts as the Acyl-thioester intermediate in catalysis.

The protein belongs to the octanoyltransferase LipL family.

The enzyme catalyses N(6)-octanoyl-L-lysyl-[glycine-cleavage complex H protein] + L-lysyl-[lipoyl-carrier protein] = N(6)-octanoyl-L-lysyl-[lipoyl-carrier protein] + L-lysyl-[glycine-cleavage complex H protein]. Its pathway is protein modification; protein lipoylation via endogenous pathway; protein N(6)-(lipoyl)lysine from octanoyl-[acyl-carrier-protein]. Catalyzes the amidotransfer (transamidation) of the octanoyl moiety from octanoyl-GcvH to the lipoyl domain of the E2 subunit of lipoate-dependent enzymes. The polypeptide is Octanoyl-[GcvH]:protein N-octanoyltransferase (Bacillus anthracis).